The chain runs to 202 residues: Superoxide dismutase [Mn] (202 aa).

Residues histidine 27, histidine 82, aspartate 164, and histidine 168 each coordinate Mn(2+).

The protein belongs to the iron/manganese superoxide dismutase family. In terms of assembly, homodimer. It depends on Mn(2+) as a cofactor.

It catalyses the reaction 2 superoxide + 2 H(+) = H2O2 + O2. Its function is as follows. Destroys superoxide anion radicals which are normally produced within the cells and which are toxic to biological systems. The polypeptide is Superoxide dismutase [Mn] (sodA) (Listeria monocytogenes serovar 1/2a (strain ATCC BAA-679 / EGD-e)).